The following is a 697-amino-acid chain: Histone deacetylase HOS3 (697 aa).

The interval 40 to 440 is histone deacetylase; that stretch reads AKAVVVLSPY…LIGLQNQDWV (401 aa). Residue His-196 is part of the active site. The interval 525 to 573 is disordered; sequence IRSHRSNASPEKELHENKPRSTEKQEQREIRSDTKVKQLSSNNRAAETQ. Residues 534-560 are compositionally biased toward basic and acidic residues; that stretch reads PEKELHENKPRSTEKQEQREIRSDTKV. The span at 561–573 shows a compositional bias: polar residues; it reads KQLSSNNRAAETQ. A phosphoserine mark is found at Ser-582, Ser-583, Ser-613, and Ser-629. The span at 625-638 shows a compositional bias: basic and acidic residues; sequence GDEDSDHELKEKNW. Residues 625–697 are disordered; sequence GDEDSDHELK…KHTTRSGGRW (73 aa). Over residues 665–674 the composition is skewed to polar residues; sequence QPQNANTPTY.

Belongs to the histone deacetylase family. HD type 1 subfamily. Homodimer.

The protein resides in the nucleus. It carries out the reaction N(6)-acetyl-L-lysyl-[histone] + H2O = L-lysyl-[histone] + acetate. Responsible for the deacetylation of lysine residues on the N-terminal part of the core histones (H2A, H2B, H3 and H4). Histone deacetylation gives a tag for epigenetic repression and plays an important role in transcriptional regulation, cell cycle progression and developmental events. Histone deacetylases act via the formation of large multiprotein complexes. This Saccharomyces cerevisiae (strain ATCC 204508 / S288c) (Baker's yeast) protein is Histone deacetylase HOS3 (HOS3).